A 511-amino-acid chain; its full sequence is Inositol-3-phosphate synthase isozyme 1 (511 aa).

24 residues coordinate NAD(+): G71, G72, N73, N74, D144, I181, Q191, R194, T231, A232, N233, T234, G282, S283, D307, S310, N341, N342, D343, K356, A394, D395, D423, and S424.

Belongs to the myo-inositol 1-phosphate synthase family. In terms of assembly, homotrimer or homotetramer. Interacts with ATXR5 and ATXR6. NAD(+) is required as a cofactor. In terms of tissue distribution, expressed in siliques, leaves, roots, seed endosperm, but not in embryos. Highest expression in leaves, but restricted to vascular tissue in older leaves.

It is found in the cytoplasm. It localises to the cytosol. The protein localises to the nucleus. The enzyme catalyses D-glucose 6-phosphate = 1D-myo-inositol 3-phosphate. It participates in polyol metabolism; myo-inositol biosynthesis; myo-inositol from D-glucose 6-phosphate: step 1/2. Its function is as follows. Key enzyme in myo-inositol biosynthesis pathway that catalyzes the conversion of glucose 6-phosphate to 1-myo-inositol 1-phosphate in a NAD-dependent manner. Catalyzes the majority of myo-inositol synthesis required for plant growth and development. Acts as a repressor of programmed cell death and protects plant cells against cell death under high light intensity or long days. Controls its own transcription by inhibiting ATXR6 activity. Reduces the deposition of inhibitory histone marks on its own promoter. The polypeptide is Inositol-3-phosphate synthase isozyme 1 (IPS1) (Arabidopsis thaliana (Mouse-ear cress)).